The chain runs to 495 residues: Putative myristoylated membrane protein 458R (495 aa).

G2 carries N-myristoyl glycine; by host lipidation. Residues N58, N71, N72, N103, and N111 are each glycosylated (N-linked (GlcNAc...) asparagine; by host). Positions 150–182 form a coiled coil; that stretch reads HLKEIHKIITKEVENAKNNNKDVTKLIEQFSQA. Transmembrane regions (helical) follow at residues 194–214 and 216–236; these read ILSLIIFSTAFLGLGGVYVGG and IAFPVTLLLSILAFYQYFNWT. N-linked (GlcNAc...) asparagine; by host glycosylation is found at N262, N314, N317, N349, and N457. A helical transmembrane segment spans residues 469–489; sequence LWLLCVAVILLFIGIIGMGLG.

The protein belongs to the IIV-6 118L/458R family.

Its subcellular location is the membrane. The protein is Putative myristoylated membrane protein 458R of Acheta domesticus (House cricket).